Reading from the N-terminus, the 573-residue chain is Peptidyl-prolyl cis-trans isomerase-like 2 (573 aa).

A U-box domain is found at 37–119; the sequence is QRLPFDCCAL…GNLHDPITYK (83 aa). Residues 223 to 247 form a disordered region; sequence KNKSGQSPAPTPSKIDDGKGQEKKE. Basic and acidic residues predominate over residues 236–247; the sequence is KIDDGKGQEKKE. Residues 312 to 469 form the PPIase cyclophilin-type domain; it reads SKAYATITTN…RDIVIQGVTV (158 aa). The segment covering 489-510 has biased composition (basic and acidic residues); that stretch reads DQSDAALKRRAEAQKEREKDRT. The interval 489 to 515 is disordered; that stretch reads DQSDAALKRRAEAQKEREKDRTTWLGT.

It belongs to the cyclophilin-type PPIase family. PPIL2 subfamily.

It localises to the nucleus. It carries out the reaction [protein]-peptidylproline (omega=180) = [protein]-peptidylproline (omega=0). The catalysed reaction is S-ubiquitinyl-[E2 ubiquitin-conjugating enzyme]-L-cysteine + [acceptor protein]-L-lysine = [E2 ubiquitin-conjugating enzyme]-L-cysteine + N(6)-ubiquitinyl-[acceptor protein]-L-lysine.. The protein operates within protein modification; protein ubiquitination. May catalyze the cis-trans isomerization of proline imidic peptide bonds in oligopeptides thereby assisting the folding of proteins. May also function as a chaperone, playing a role in intracellular transport of proteins. May also have a protein ubiquitin ligase activity acting as an E3 ubiquitin protein ligase or as a ubiquitin-ubiquitin ligase promoting elongation of ubiquitin chains on proteins. This Cryptococcus neoformans var. neoformans serotype D (strain B-3501A) (Filobasidiella neoformans) protein is Peptidyl-prolyl cis-trans isomerase-like 2 (CYP8).